The primary structure comprises 842 residues: Cullin-8 (842 aa).

The tract at residues 1-50 (MINESVSKREGFHESISRETSASNALGLYNKFNDERNPRYRTMIAELHEF) is required for interaction with MMS1. Positions 755 to 765 (LQSSNTGGERT) are enriched in polar residues. Residues 755–775 (LQSSNTGGERTSSAHHEGSNS) form a disordered region. A Glycyl lysine isopeptide (Lys-Gly) (interchain with G-Cter in NEDD8) cross-link involves residue Lys-791.

It belongs to the cullin family. Component of multiple cullin-RING ligases (CRLs) composed of 4 subunits: the RING protein HRT1, the cullin RTT101, a linker protein MMS1, and one of many alternative substrate receptors belonging to a protein family described as DCAF (DDB1- and CUL4-associated factor). Component of a RTT101(MMS1-MMS22) complex with the substrate receptor MMS22. This complex further interacts with RTT107 and CTF4 to form RTT101-MMS1-MMS22-RTT107 and RTT101-MMS1-MMS22-CTF4 complexes respectively. Component of a RTT101(MSS1-CRT10) complex with the substrate receptor CRT10. Component of a RTT101(MSS1-ESC2) complex with the potential substrate receptor ESC2. Component of a RTT101(MSS1-ORC5) complex with the potential substrate receptor ORC5. Interacts (via C-ter) with HRT1; required for ubiquitin-ligase activity. Interacts (via N-ter) with MMS1. In terms of processing, neddylated. HRT1-binding is necessary for RUB1/NEDD8 modification of RTT101. The modification enhances ubiquitin-ligase activity.

It localises to the cytoplasm. Its subcellular location is the nucleus. It participates in protein modification; protein ubiquitination. Core component of multiple cullin-RING-based E3 ubiquitin-protein ligase complexes (CRLs), which mediate the ubiquitination of target proteins. As a scaffold protein may contribute to catalysis through positioning of the substrate and the ubiquitin-conjugating enzyme. The CRL associates with CDC34 as the E2 ubiquitin-conjugating enzyme. The functional specificity of the CRL depends on the type of the associated substrate receptor protein. RTT101(MMS1-MMS22) promotes fork progression through damaged DNA or natural pause sites by stabilizing replication proteins like the replication fork-pausing complex (FPC) and leading-strand polymerase at stalled replication forks. RTT101(MMS1-MMS22) ubiquitinates the acetylated histones H3K56ac-H4 at lysine residues H3K121, H3K122 and H3K125. Ubiquitination is required for efficient histone deposition during replication-coupled nucleosome assembly, probably by facilitating the transfer of H3-H4 from ASF1 to other chaperones involved in histone deposition. RTT101(MMS1-CRT10) may regulate nucleotide synthesis through transcriptional regulation of ribonucleotide reductase. RTT101(MMS1) is also involved in the non-functional rRNA decay (NRD) of 25S rRNA through the selective, ubiquitination-dependent degradation of nonfunctional ribosomal particles. Ubiquitinates the FACT (facilitates chromatin transcription) complex subunit SPT16 in an MMS1-independent manner. Involved in regulation of Ty1 transposition and protects the genome from Ty1 integration upstream of tRNA genes. The sequence is that of Cullin-8 (RTT101) from Saccharomyces cerevisiae (strain ATCC 204508 / S288c) (Baker's yeast).